The following is a 323-amino-acid chain: tRNA U34 carboxymethyltransferase (323 aa).

Residues K91, W105, K110, G130, D152 to T154, I181 to E182, M196, Y200, and R315 each bind carboxy-S-adenosyl-L-methionine.

Belongs to the class I-like SAM-binding methyltransferase superfamily. CmoB family. Homotetramer.

The enzyme catalyses carboxy-S-adenosyl-L-methionine + 5-hydroxyuridine(34) in tRNA = 5-carboxymethoxyuridine(34) in tRNA + S-adenosyl-L-homocysteine + H(+). In terms of biological role, catalyzes carboxymethyl transfer from carboxy-S-adenosyl-L-methionine (Cx-SAM) to 5-hydroxyuridine (ho5U) to form 5-carboxymethoxyuridine (cmo5U) at position 34 in tRNAs. This chain is tRNA U34 carboxymethyltransferase, found in Escherichia coli O139:H28 (strain E24377A / ETEC).